The following is an 859-amino-acid chain: Suppressor protein MPT5 (859 aa).

The disordered stretch occupies residues 85–108 (MNNTSTSNSANSFSPNPNAASNST). Over residues 86–108 (NNTSTSNSANSFSPNPNAASNST) the composition is skewed to low complexity. The PUM-HD domain occupies 188 to 596 (DNSSFGLSSS…KIKLKVKAYA (409 aa)). Pumilio repeat units follow at residues 209-247 (PLRD…LMYE), 248-283 (QIKP…LLIQ), 284-320 (TIYP…LIIK), 325-362 (EFTS…FIID), 363-400 (AIVE…KISV), 401-438 (KIVQ…ELFN), 439-474 (RLSN…FIVN), and 503-539 (DIFT…AYNK). A disordered region spans residues 620–658 (TINNENKNPHNKNSHNHNHNHNHNHAHNNNNNNNQKSHT). A compositionally biased stretch (basic residues) spans 628-645 (PHNKNSHNHNHNHNHNHA). 3 positions are modified to phosphoserine: Ser662, Ser834, and Ser838.

It localises to the cytoplasm. Functionally, RNA-binding protein involved in post-transcriptional regulation. Negatively regulates expression of HO by binding to the 3'-UTR of HO mRNA. Predominantly binds to mRNAs encoding chromatin modifiers and spindle pole body components. Recognizes and binds to 5'-TGTAA[CT]A[AT]TA-3' in the 3'-UTR of target mRNAs. Multicopy suppressor of POP2 mutation. Required for high temperature growth. In Saccharomyces cerevisiae (strain ATCC 204508 / S288c) (Baker's yeast), this protein is Suppressor protein MPT5 (MPT5).